The primary structure comprises 321 residues: Phospho-N-acetylmuramoyl-pentapeptide-transferase (321 aa).

Helical transmembrane passes span 1-21, 49-69, 77-97, 112-132, 140-160, 176-196, 200-220, 225-245, 250-270, and 300-320; these read MIYVLAIIAFLITLILVPILI, TMGGLTFLISIIITTIIAIIF, ILLLFVTVGFGLIGFVDDYII, FLAQIAIAVIFFILSDVFNMI, IPFTNVSIPLSVVYVVFIVFW, GLATGLSIIAFAMYAIMSFML, AVGTFCIIMVFALLGFLIYNV, VFMGDTGSLALGGIIATVSIM, ISLIFIGFVFVAETLSVILQV, and VVSVFWIVGLITGLIGLWIGV.

The protein belongs to the glycosyltransferase 4 family. MraY subfamily. The cofactor is Mg(2+).

The protein localises to the cell membrane. It catalyses the reaction UDP-N-acetyl-alpha-D-muramoyl-L-alanyl-gamma-D-glutamyl-L-lysyl-D-alanyl-D-alanine + di-trans,octa-cis-undecaprenyl phosphate = Mur2Ac(oyl-L-Ala-gamma-D-Glu-L-Lys-D-Ala-D-Ala)-di-trans,octa-cis-undecaprenyl diphosphate + UMP. It participates in cell wall biogenesis; peptidoglycan biosynthesis. In terms of biological role, catalyzes the initial step of the lipid cycle reactions in the biosynthesis of the cell wall peptidoglycan: transfers peptidoglycan precursor phospho-MurNAc-pentapeptide from UDP-MurNAc-pentapeptide onto the lipid carrier undecaprenyl phosphate, yielding undecaprenyl-pyrophosphoryl-MurNAc-pentapeptide, known as lipid I. This Staphylococcus carnosus (strain TM300) protein is Phospho-N-acetylmuramoyl-pentapeptide-transferase.